The chain runs to 170 residues: Urease accessory protein UreE (170 aa).

It belongs to the UreE family.

Its subcellular location is the cytoplasm. Involved in urease metallocenter assembly. Binds nickel. Probably functions as a nickel donor during metallocenter assembly. In Helicobacter pylori (strain ATCC 700392 / 26695) (Campylobacter pylori), this protein is Urease accessory protein UreE.